The chain runs to 373 residues: Bilirubin reductase (373 aa).

Residue Q92 coordinates FMN. The Proton donor role is filled by R168. K215 is a binding site for FMN. 4 residues coordinate [4Fe-4S] cluster: C344, C347, C351, and C363.

This sequence belongs to the NADH:flavin oxidoreductase/NADH oxidase family. The cofactor is FMN. It depends on [4Fe-4S] cluster as a cofactor.

It carries out the reaction urobilinogen + 4 A = (4Z,15Z)-bilirubin IXalpha + 4 AH2. The enzyme catalyses urobilinogen + 2 A = (4Z,15Z)-mesobilirubin IXalpha + 2 AH2. It participates in porphyrin-containing compound metabolism; protoheme degradation. In terms of biological role, bilirubin reductase that catalyzes reduction of mesobilirubin and/or bilirubin to urobilinogen, a key step during heme degradation. Cooperates with BilS, which is probably involved in electron transfer for BilR. Urobilinogen then spontaneously degrades into urobilin, which gives urine its distinctive yellow color. This Clostridium symbiosum (strain WAL-14163) protein is Bilirubin reductase.